Reading from the N-terminus, the 213-residue chain is Putative tRNA methyltransferase MPN_351 (213 aa).

It belongs to the TrmK family.

The protein localises to the cytoplasm. This chain is Putative tRNA methyltransferase MPN_351, found in Mycoplasma pneumoniae (strain ATCC 29342 / M129 / Subtype 1) (Mycoplasmoides pneumoniae).